We begin with the raw amino-acid sequence, 318 residues long: Very-long-chain 3-oxoacyl-CoA reductase-B (318 aa).

A helical membrane pass occupies residues 15–35 (FWYLGVVAATWWGLRAAWCLL). 54-83 (GKWAVVTGATDGIGKAYAEELARRGMNIVL) serves as a coordination point for NADP(+). The next 2 helical transmembrane spans lie at 187–207 (GVVL…LTVY) and 281–301 (AITG…SMGM). S194 contacts substrate. Catalysis depends on Y207, which acts as the Proton acceptor.

It belongs to the short-chain dehydrogenases/reductases (SDR) family. 17-beta-HSD 3 subfamily.

It localises to the endoplasmic reticulum membrane. The enzyme catalyses a very-long-chain (3R)-3-hydroxyacyl-CoA + NADP(+) = a very-long-chain 3-oxoacyl-CoA + NADPH + H(+). It carries out the reaction 17beta-estradiol + NAD(+) = estrone + NADH + H(+). It catalyses the reaction 17beta-estradiol + NADP(+) = estrone + NADPH + H(+). It functions in the pathway lipid metabolism; fatty acid biosynthesis. Its pathway is steroid biosynthesis; estrogen biosynthesis. Functionally, catalyzes the second of the four reactions of the long-chain fatty acids elongation cycle. This endoplasmic reticulum-bound enzymatic process, allows the addition of two carbons to the chain of long- and very long-chain fatty acids/VLCFAs per cycle. This enzyme has a 3-ketoacyl-CoA reductase activity, reducing 3-ketoacyl-CoA to 3-hydroxyacyl-CoA, within each cycle of fatty acid elongation. Thereby, it may participate in the production of VLCFAs of different chain lengths that are involved in multiple biological processes as precursors of membrane lipids and lipid mediators. May also catalyze the transformation of estrone (E1) into estradiol (E2) and play a role in estrogen formation. This is Very-long-chain 3-oxoacyl-CoA reductase-B (hsd17b12-b) from Xenopus laevis (African clawed frog).